A 146-amino-acid chain; its full sequence is Cytochrome b5 type B (146 aa).

A propeptide spanning residues 1 to 11 (MATPEASGSGE) is cleaved from the precursor. S19 is subject to Phosphoserine. The region spanning 20–96 (VTYYRLEEVA…LKQYYIGDVH (77 aa)) is the Cytochrome b5 heme-binding domain. K30 is modified (N6-acetyllysine). Phosphoserine is present on S33. Residues H55 and H79 each contribute to the heme site. The residue at position 80 (S80) is a Phosphoserine. Residues 119 to 136 (WAYWFVPIVGAILIGFLY) form a helical membrane-spanning segment.

This sequence belongs to the cytochrome b5 family. Component of a complex composed of cytochrome b5, NADH-cytochrome b5 reductase (CYB5R3) and MTARC2.

Its subcellular location is the mitochondrion outer membrane. In terms of biological role, cytochrome b5 is a membrane-bound hemoprotein functioning as an electron carrier for several membrane-bound oxygenases. In Mus musculus (Mouse), this protein is Cytochrome b5 type B (Cyb5b).